The chain runs to 144 residues: Cornifin-A (144 aa).

Positions 1 to 41 are disordered; it reads MSSHQQKQPCTVPPQLHQQQVKQPCQPPPQEPCAPKTKDPC. Positions 13 to 24 are enriched in low complexity; sequence PPQLHQQQVKQP. Tandem repeats lie at residues 27–34, 35–42, 43–49, 50–57, 58–65, 66–73, 74–81, 82–89, 90–97, 98–105, 106–113, 114–121, and 122–129. A 13 X 8 AA approximate tandem repeats region spans residues 27–129; it reads PPPQEPCAPK…CHPVVPEPCP (103 aa).

It belongs to the cornifin (SPRR) family. Expressed in fetal periderm, hair follicles and in the thickened epidermis of the lip and footpad. Also present in the epithelia of various tissues such as the penis, vagina, forestomach, tongue and esophagus.

The protein resides in the cytoplasm. Cross-linked envelope protein of keratinocytes. It is a keratinocyte protein that first appears in the cell cytosol, but ultimately becomes cross-linked to membrane proteins by transglutaminase. All that results in the formation of an insoluble envelope beneath the plasma membrane. May participate widely in the construction of cell envelopes in cornifying epithelia characterized by either increased thickness or a requirement for extreme flexibility. The chain is Cornifin-A (Sprr1a) from Mus musculus (Mouse).